The sequence spans 728 residues: Beta-galactosidase 12 (728 aa).

The N-terminal stretch at 1–27 (MGLNFREKAWILLGILCCSSLICSVKA) is a signal peptide. The active-site Proton donor is the Glu185. Glu254 functions as the Nucleophile in the catalytic mechanism. 3 N-linked (GlcNAc...) asparagine glycosylation sites follow: Asn255, Asn380, and Asn450.

Belongs to the glycosyl hydrolase 35 family. Ubiquitous, with higher expression levels in roots and siliques.

It localises to the secreted. The protein localises to the extracellular space. The protein resides in the apoplast. It catalyses the reaction Hydrolysis of terminal non-reducing beta-D-galactose residues in beta-D-galactosides.. This is Beta-galactosidase 12 (BGAL12) from Arabidopsis thaliana (Mouse-ear cress).